The following is a 246-amino-acid chain: DNA repair protein RecO (246 aa).

It belongs to the RecO family.

Its function is as follows. Involved in DNA repair and RecF pathway recombination. The chain is DNA repair protein RecO from Marinobacter nauticus (strain ATCC 700491 / DSM 11845 / VT8) (Marinobacter aquaeolei).